The following is a 181-amino-acid chain: 6,7-dimethyl-8-ribityllumazine synthase (181 aa).

Residues Y27, 58–60, and 87–89 contribute to the 5-amino-6-(D-ribitylamino)uracil site; these read ALE and CVI. 92-93 is a (2S)-2-hydroxy-3-oxobutyl phosphate binding site; the sequence is ET. The active-site Proton donor is H95. N120 is a binding site for 5-amino-6-(D-ribitylamino)uracil. R134 is a binding site for (2S)-2-hydroxy-3-oxobutyl phosphate.

This sequence belongs to the DMRL synthase family.

It catalyses the reaction (2S)-2-hydroxy-3-oxobutyl phosphate + 5-amino-6-(D-ribitylamino)uracil = 6,7-dimethyl-8-(1-D-ribityl)lumazine + phosphate + 2 H2O + H(+). It participates in cofactor biosynthesis; riboflavin biosynthesis; riboflavin from 2-hydroxy-3-oxobutyl phosphate and 5-amino-6-(D-ribitylamino)uracil: step 1/2. Its function is as follows. Catalyzes the formation of 6,7-dimethyl-8-ribityllumazine by condensation of 5-amino-6-(D-ribitylamino)uracil with 3,4-dihydroxy-2-butanone 4-phosphate. This is the penultimate step in the biosynthesis of riboflavin. In Methylobacterium nodulans (strain LMG 21967 / CNCM I-2342 / ORS 2060), this protein is 6,7-dimethyl-8-ribityllumazine synthase.